We begin with the raw amino-acid sequence, 210 residues long: Probable nicotinate-nucleotide adenylyltransferase (210 aa).

This sequence belongs to the NadD family.

It catalyses the reaction nicotinate beta-D-ribonucleotide + ATP + H(+) = deamido-NAD(+) + diphosphate. It participates in cofactor biosynthesis; NAD(+) biosynthesis; deamido-NAD(+) from nicotinate D-ribonucleotide: step 1/1. Catalyzes the reversible adenylation of nicotinate mononucleotide (NaMN) to nicotinic acid adenine dinucleotide (NaAD). The chain is Probable nicotinate-nucleotide adenylyltransferase from Streptococcus pyogenes serotype M3 (strain ATCC BAA-595 / MGAS315).